The sequence spans 485 residues: NADH-quinone oxidoreductase subunit N (485 aa).

The next 14 helical transmembrane spans lie at 8-28 (LIAL…MLSI), 35-55 (FLNA…LWFV), 71-91 (GFAM…CTFA), 105-125 (FYLL…ANHL), 127-147 (SLFL…GYAF), 159-179 (YTIL…LVYA), 203-223 (LLAG…LVPF), 235-255 (PAPV…GVVM), 271-291 (VVLA…ALSQ), 297-317 (LLGY…IALQ), 326-346 (VGVY…VVSL), 373-393 (AAVM…LGFI), 408-430 (WWLV…RVAV), and 455-475 (IVVL…QPLI).

This sequence belongs to the complex I subunit 2 family. As to quaternary structure, NDH-1 is composed of 13 different subunits. Subunits NuoA, H, J, K, L, M, N constitute the membrane sector of the complex.

It localises to the cell inner membrane. The catalysed reaction is a quinone + NADH + 5 H(+)(in) = a quinol + NAD(+) + 4 H(+)(out). Its function is as follows. NDH-1 shuttles electrons from NADH, via FMN and iron-sulfur (Fe-S) centers, to quinones in the respiratory chain. The immediate electron acceptor for the enzyme in this species is believed to be ubiquinone. Couples the redox reaction to proton translocation (for every two electrons transferred, four hydrogen ions are translocated across the cytoplasmic membrane), and thus conserves the redox energy in a proton gradient. This is NADH-quinone oxidoreductase subunit N from Escherichia coli O81 (strain ED1a).